A 450-amino-acid chain; its full sequence is MAPALSPTRSHHVAVIGAGPAGLVAARELRREGHSVVVFEKQKQVGGTWIYTDEVESDPLSVDPTRSVVHSSVYRSLRINGTRECTGYRDFPFVVRSGVSRDRRRFPSHGEVLAYLKDFAKEFGIEEMVRFETEVVKVSPAAEEGIGKWRIESTEKEKKVRRDEIYDAVVVCNGHYVEPRLAQIPGISSWPGKEMHSHNYRIPEPFRDKVAVLIGNSSSAEDISRDIARVAKEVHVACRSNPADTFIKQTGYNNLWTHSMIESVHEDGSVVYQNGKTISVDIIMHCTGYKYHFPFLDTNGIVTVDDNRVGPLYKDVFPPAFAPWLSFIGIPWQVLPFPMFELQSKWIAGVLSGRIPLPSKEDMMIEIKTFYSTLEVQGIPKRYTHRMGNTQFEYDNWLASQCGCSETEEWRKEMCLANGVRKEAHPETYRDEWDDHHLVSEAYQDFSLYS.

17 to 22 (GAGPAG) is a binding site for FAD. 215–220 (GNSSSA) provides a ligand contact to NADP(+).

This sequence belongs to the FMO family. It depends on FAD as a cofactor.

Catalyzes the conversion of methylthioalkyl glucosinolates of any chain length into methylsulfinylalkyl glucosinolates. The protein is Flavin-containing monooxygenase FMO GS-OX-like 5 of Arabidopsis thaliana (Mouse-ear cress).